A 623-amino-acid chain; its full sequence is Chaperone protein HtpG (623 aa).

The segment at 1-336 (MVSKQQTMGF…ASDLPLNISR (336 aa)) is a; substrate-binding. The tract at residues 337 to 550 (EILQDNKQVE…EQDMGLEMQR (214 aa)) is b. Residues 551–623 (ILQAAGQQVP…NRVNRLLVSS (73 aa)) form a c region.

Belongs to the heat shock protein 90 family. As to quaternary structure, homodimer.

It localises to the cytoplasm. In terms of biological role, molecular chaperone. Has ATPase activity. The polypeptide is Chaperone protein HtpG (Legionella pneumophila subsp. pneumophila (strain Philadelphia 1 / ATCC 33152 / DSM 7513)).